A 196-amino-acid chain; its full sequence is uncharacterized protein (196 aa).

The disordered stretch occupies residues 1–21; the sequence is MQPEVEPLISPNLGAPGSHRE.

This is an uncharacterized protein from Mus musculus (Mouse).